The chain runs to 899 residues: Probable dipeptidyl-aminopeptidase B (899 aa).

The segment at 1-69 is disordered; that stretch reads MKLDRMRVGS…NHNGRTQGNY (69 aa). Over 1–99 the chain is Cytoplasmic; that stretch reads MKLDRMRVGS…NGKSSQRRTL (99 aa). Low complexity predominate over residues 32–43; sequence DSSSTASISLTL. The chain crosses the membrane as a helical; Signal-anchor for type II membrane protein span at residues 100–120; sequence IVFWLLVALCVGGWAVAFLFF. The Vacuolar portion of the chain corresponds to 121–899; it reads VTSPGNKTST…KYFNLSFLGH (779 aa). A compositionally biased stretch (polar residues) spans 128–139; the sequence is TSTSPHSGSNSP. Positions 128–149 are disordered; that stretch reads TSTSPHSGSNSPEGDVTKPGIP. N-linked (GlcNAc...) asparagine glycosylation is found at Asn212, Asn308, and Asn360. Ser765 acts as the Charge relay system in catalysis. N-linked (GlcNAc...) asparagine glycosylation is found at Asn819, Asn824, and Asn827. Active-site charge relay system residues include Asp842 and His875. N-linked (GlcNAc...) asparagine glycosylation occurs at Asn893.

Belongs to the peptidase S9B family.

The protein localises to the vacuole membrane. It carries out the reaction Release of an N-terminal dipeptide, Xaa-Yaa-|-Zaa-, from a polypeptide, preferentially when Yaa is Pro, provided Zaa is neither Pro nor hydroxyproline.. Functionally, type IV dipeptidyl-peptidase which removes N-terminal dipeptides sequentially from polypeptides having unsubstituted N-termini provided that the penultimate residue is proline. This Trichophyton verrucosum (strain HKI 0517) protein is Probable dipeptidyl-aminopeptidase B (DAPB).